We begin with the raw amino-acid sequence, 202 residues long: N-(5'-phosphoribosyl)anthranilate isomerase (202 aa).

Belongs to the TrpF family.

The enzyme catalyses N-(5-phospho-beta-D-ribosyl)anthranilate = 1-(2-carboxyphenylamino)-1-deoxy-D-ribulose 5-phosphate. It participates in amino-acid biosynthesis; L-tryptophan biosynthesis; L-tryptophan from chorismate: step 3/5. This chain is N-(5'-phosphoribosyl)anthranilate isomerase, found in Listeria monocytogenes serotype 4b (strain CLIP80459).